A 555-amino-acid chain; its full sequence is MAVRSTAAPPTPWSRSLAEAQIHESAFVHPFSNIIGDVHIGANVIIAPGTSIRADEGTPFHIGENTNIQDGVVIHGLEQGRVVGDDNKEYSVWVGSSASLTHMALIHGPAYVGDNSFIGFRSTVFNAKVGAGCIVMMHALIKDVEVPPGKYVPSGAIITNQKQADRLPDVQPQDRDFAHHVIGINQALRAGYLCAADSKCIAPLRNDQVKSYTSTTVIGLERSSEVASNSLGAETIEQVRYLLEQGYKIGSEHVDQRRFRTGSWTSCQPIEARSVGDALAALEACLADHSGEYVRLFGIDPKGKRRVLETIIQRPDGVVAGSTSFKAPASNTNGNGSYHSNGNGNGYSNGATSGKVSAETVDQIRQLLAGGYKIGTEHVDERRFRTGSWNSCKPIEATSAGEVVAALEECIDSHQGEYIRLIGIDPKAKRRVLESIIQRPNGQVAPSSSPRTVVSASSASSGTATATATRLSTEVVDQVRQILGGGYKLSIEHVDQRRFRTGSWSSTGAISATSEREAIAVIEASLSEFAGEYVRLIGIDPKAKRRVLETIIQRP.

The segment at 1–209 (MAVRSTAAPP…CIAPLRNDQV (209 aa)) is has carbonic anhydrase (CA) activity. Glu-56 (proton donor/acceptor) is an active-site residue. Residues His-75, His-102, and His-107 each coordinate Zn(2+). Residues Cys-194 and Cys-200 are joined by a disulfide bond. Residues 223 to 315 (SSEVASNSLG…RVLETIIQRP (93 aa)) are rbcS-like repeat 1, SSUL1. Disordered stretches follow at residues 323 to 351 (TSFKAPASNTNGNGSYHSNGNGNGYSNGA) and 441 to 464 (NGQVAPSSSPRTVVSASSASSGTA). 2 stretches are compositionally biased toward low complexity: residues 330–351 (SNTNGNGSYHSNGNGNGYSNGA) and 445–464 (APSSSPRTVVSASSASSGTA). The segment at 347–440 (YSNGATSGKV…RVLESIIQRP (94 aa)) is rbcS-like repeat 2, SSUL2. A rbcS-like repeat 3, SSUL3 region spans residues 460 to 555 (SSGTATATAT…RVLETIIQRP (96 aa)).

The protein belongs to the gamma-class carbonic anhydrase family. As to quaternary structure, probable homotrimer; zinc is bound between adjacent monomers. Full length protein (M58) interacts with CcmN. The C-terminal RbcS-like domains (SSUL) bind to holo-RuBisCO, as does the M35 short form. Requires Zn(2+) as cofactor. The first amino acid of the short form (equivalent to Val-226) is not seen in Edman degradation, while Ser-230 may be post-translationally modified. Migrates in gels as 2 about equal forms of about 60 and 35 kDa (called M58 and M35). They are probably the result of alternative translation initiation.

It localises to the carboxysome. The protein localises to the cytoplasm. The catalysed reaction is hydrogencarbonate + H(+) = CO2 + H2O. With respect to regulation, carbonic anhydrase (CA) activity is probably under redox control to remain inactive in the cytoplasm. Carbonic anhydrase (CA) activity of full-length protein and N-terminal fragment is inhibited by ethoxyzolamide. N-terminal fragment CA activity is activated under oxidizing conditions and inhibited under reducing conditions. In terms of biological role, functions as a scaffold protein for the assembly of beta-carboxysomes, initiates carboxysome assembly by coalescing RuBisCO (ribulose bisphosphate carboxylase, rbcL-rbcS). Produced as a full-length (M58) and a short form (M35), possibly by alternative translation initiation; probably both forms are required for correct carboxysome assembly and growth. In this strain both forms are equally abundant. A moderately active carbonic anhydrase that catalyzes the reversible hydration of carbon dioxide. Essential to photosynthetic carbon dioxide fixation, supplies CO(2) to ribulose bisphosphate carboxylase (RuBisCO) in the carboxysome. Also hydrolyzes COS. Its function is as follows. Beta-carboxysome assembly initiates when soluble RuBisCO is condensed into a liquid matrix in a pre-carboxysome by the RbcS-like domains of probably both forms of CcmM. CcmN interacts with the N-terminus of full length CcmM, and then recruits the shell proteins (CcmK) via CcmN's encapsulation peptide. Shell formation requires both CcmK proteins and CcmO. CcmL caps the otherwise elongated carboxysome. Once fully encapsulated carboxysomes are formed, they migrate within the cell probably via interactions with the cytoskeleton. This is Carboxysome assembly protein CcmM from Nostoc sp. (strain PCC 7120 / SAG 25.82 / UTEX 2576).